The primary structure comprises 524 residues: MTTHVGPQTTLLHQTGQISALIAGEAVQTCEASSCQMSGTPFQQWTYVTEGRYTNARTHPSDEDRRRQTTVSNPRYLAQEPPRFLLPTAQNNAPTMSQSATYSTLPVQGFPEQNRVLDNRSDPKYGPLPATTGSLAQYSIQRPSTSRNMENAGSSSSYYDAPSCSRGSVGSIGRMNDLDSQYSGSTTAFPSPVHSDSSPIYPAIAPISGYQQQLPIHQRHTTSSMPSGFENLLHHHSTSPSPPPRCASSSSRYRLFIRQQPLAARACGAGDRDRRPVDPPPIIQLLLTEFNPNSEKDRSILQDPRFTVGCLLYPVRNPSYLPGSGSGAGSSDTNTNSNDKSRHESMSSYSQLGINLEDSHATGQSTPLLSGKAFVSPFFVDEEPDPNTAPAHPSSTDDSTYDASPRTVTHRFRNRPLPKPPACFFIFSDLSVRTAGLYRLQFRLMNWGSIEDTGQSMPILAEVWSEPFRVCAAKDFPGMRDSSLLTLRLKELGFVELKTRGQGMGKGRRVGIGSSKVSSRARVE.

Disordered regions lie at residues 114 to 195, 322 to 349, 380 to 413, and 503 to 524; these read NRVL…PVHS, PGSG…MSSY, VDEE…HRFR, and GMGK…ARVE. 2 stretches are compositionally biased toward polar residues: residues 131-153 and 178-195; these read TTGS…ENAG and LDSQ…PVHS. A Velvet domain is found at 248-500; the sequence is SSSSRYRLFI…ELGFVELKTR (253 aa). Over residues 393–402 the composition is skewed to polar residues; the sequence is PSSTDDSTYD.

This sequence belongs to the velvet family. VelC subfamily. In terms of assembly, interacts with vosA.

The protein resides in the nucleus. Its function is as follows. Velvet-domain-containing protein that acts as a positive regulator of sexual development. Positively regulates the production of the sexual fruiting bodies called cleistothecia. The protein is Sexual development regulator velC of Emericella nidulans (strain FGSC A4 / ATCC 38163 / CBS 112.46 / NRRL 194 / M139) (Aspergillus nidulans).